The chain runs to 207 residues: Large ribosomal subunit protein uL4 (207 aa).

Residues 48 to 89 form a disordered region; it reads THKVKNRSEVSGGGRKPWRQKGTGRARQGSIRSPQWRGGGTV.

It belongs to the universal ribosomal protein uL4 family. As to quaternary structure, part of the 50S ribosomal subunit.

In terms of biological role, one of the primary rRNA binding proteins, this protein initially binds near the 5'-end of the 23S rRNA. It is important during the early stages of 50S assembly. It makes multiple contacts with different domains of the 23S rRNA in the assembled 50S subunit and ribosome. Its function is as follows. Forms part of the polypeptide exit tunnel. This is Large ribosomal subunit protein uL4 from Bacillus cytotoxicus (strain DSM 22905 / CIP 110041 / 391-98 / NVH 391-98).